The chain runs to 350 residues: Variable large protein 4 (350 aa).

Positions 1-18 (MRRRISAIIMTLFMVLVS) are cleaved as a signal peptide. C19 is lipidated: N-palmitoyl cysteine. C19 is lipidated: S-diacylglycerol cysteine.

The protein belongs to the variable large protein (Vlp) family. Delta subfamily.

Its subcellular location is the cell outer membrane. Functionally, the Vlp and Vsp proteins are antigenically distinct proteins, only one vlp or vsp gene is transcriptionally active at any one time. Switching between these genes is a mechanism of host immune response evasion. The protein is Variable large protein 4 of Borrelia hermsii.